Reading from the N-terminus, the 345-residue chain is N-glycosylase/DNA lyase (345 aa).

DNA-binding residues include Asn-149, Arg-154, and Arg-204. The Schiff-base intermediate with DNA role is filled by Lys-249. Pro-266 and Asp-268 together coordinate 8-oxoguanine. Residues His-270 and Gln-287 each contribute to the DNA site. 8-oxoguanine contacts are provided by Gln-315 and Phe-319.

The protein belongs to the type-1 OGG1 family. In terms of tissue distribution, highest expression in testis.

It localises to the nucleus. It is found in the nucleoplasm. Its subcellular location is the nucleus speckle. The protein localises to the nucleus matrix. It carries out the reaction 2'-deoxyribonucleotide-(2'-deoxyribose 5'-phosphate)-2'-deoxyribonucleotide-DNA = a 3'-end 2'-deoxyribonucleotide-(2,3-dehydro-2,3-deoxyribose 5'-phosphate)-DNA + a 5'-end 5'-phospho-2'-deoxyribonucleoside-DNA + H(+). Functionally, DNA repair enzyme that incises DNA at 8-oxoG residues. Excises 7,8-dihydro-8-oxoguanine and 2,6-diamino-4-hydroxy-5-N-methylformamidopyrimidine (FAPY) from damaged DNA. Has a beta-lyase activity that nicks DNA 3' to the lesion. This chain is N-glycosylase/DNA lyase (Ogg1), found in Mus musculus (Mouse).